We begin with the raw amino-acid sequence, 430 residues long: Tol-Pal system protein TolB (430 aa).

Residues 1 to 19 (MKKQIFFTLILLISGLARA) form the signal peptide.

The protein belongs to the TolB family. In terms of assembly, the Tol-Pal system is composed of five core proteins: the inner membrane proteins TolA, TolQ and TolR, the periplasmic protein TolB and the outer membrane protein Pal. They form a network linking the inner and outer membranes and the peptidoglycan layer.

It localises to the periplasm. Functionally, part of the Tol-Pal system, which plays a role in outer membrane invagination during cell division and is important for maintaining outer membrane integrity. This Hahella chejuensis (strain KCTC 2396) protein is Tol-Pal system protein TolB.